The sequence spans 343 residues: tRNA-specific 2-thiouridylase MnmA 2 (343 aa).

Residues 7–14 (GMSGGVDS) and Leu33 contribute to the ATP site. Cys91 serves as the catalytic Nucleophile. Cys91 and Cys189 are joined by a disulfide. Gly115 serves as a coordination point for ATP. An interaction with tRNA region spans residues 139 to 141 (KDQ). Cys189 (cysteine persulfide intermediate) is an active-site residue.

Belongs to the MnmA/TRMU family.

The protein resides in the cytoplasm. It catalyses the reaction S-sulfanyl-L-cysteinyl-[protein] + uridine(34) in tRNA + AH2 + ATP = 2-thiouridine(34) in tRNA + L-cysteinyl-[protein] + A + AMP + diphosphate + H(+). In terms of biological role, catalyzes the 2-thiolation of uridine at the wobble position (U34) of tRNA, leading to the formation of s(2)U34. The polypeptide is tRNA-specific 2-thiouridylase MnmA 2 (Fusobacterium nucleatum subsp. nucleatum (strain ATCC 25586 / DSM 15643 / BCRC 10681 / CIP 101130 / JCM 8532 / KCTC 2640 / LMG 13131 / VPI 4355)).